The sequence spans 504 residues: Maturase K (504 aa).

This sequence belongs to the intron maturase 2 family. MatK subfamily.

It is found in the plastid. The protein resides in the chloroplast. Its function is as follows. Usually encoded in the trnK tRNA gene intron. Probably assists in splicing its own and other chloroplast group II introns. This chain is Maturase K, found in Hamamelis virginiana (Witch-hazel).